Here is a 596-residue protein sequence, read N- to C-terminus: Elongation factor 4 (596 aa).

The 183-residue stretch at 2 to 184 (KHIRNFSIIA…VIVEQIPPPE (183 aa)) folds into the tr-type G domain. Residues 14 to 19 (DHGKST) and 131 to 134 (NKID) contribute to the GTP site.

This sequence belongs to the TRAFAC class translation factor GTPase superfamily. Classic translation factor GTPase family. LepA subfamily.

The protein localises to the cell inner membrane. The catalysed reaction is GTP + H2O = GDP + phosphate + H(+). Functionally, required for accurate and efficient protein synthesis under certain stress conditions. May act as a fidelity factor of the translation reaction, by catalyzing a one-codon backward translocation of tRNAs on improperly translocated ribosomes. Back-translocation proceeds from a post-translocation (POST) complex to a pre-translocation (PRE) complex, thus giving elongation factor G a second chance to translocate the tRNAs correctly. Binds to ribosomes in a GTP-dependent manner. The protein is Elongation factor 4 of Shewanella pealeana (strain ATCC 700345 / ANG-SQ1).